The sequence spans 564 residues: Lamassu protein LmuB (564 aa).

Component of antiviral defense system Lamassu type II, composed of LmuA and LmuB. Expression of Lamassu type II in B.subtilis (strain BEST7003) confers resistance to phage SpBeta. May be an ATPase. This is Lamassu protein LmuB from Bacillus cereus (strain VD014).